Here is an 884-residue protein sequence, read N- to C-terminus: MFNFLENEKYKLKEYQPLVNQINLLETSVKNYTDIELKEQFDKLRKEYFLSQNFSNDIIARSFSLTREAAFRTIGLRPFDQQLLGGLVLNSGKITEMKTGEGKTLVATLPAALNAISGRGVHIVTVNDYLAKRDSTWMGQIYDYLGLTVGLVQSQMESQERKDNYFQDITYITNSELGFDYLRDNQVKTFQEMVQRKFNYCIIDEVDAILIDEARTPLVLSIPDTIHNPKIYLDANTTAKSLIRDVDFKADEKTKNITFTDIGIDKIEYFRKIPNIYGTNAGFLFYLQNAISANIFFRKNSEYIIENNKIAIVDEFTGRVMPVRRWSNGLHEAIEAKESIDITQTSRISSSITYQNFFTLYPKLAGMTGTAKSAALELESIYNLEVVVIPTSKKFQRKDLPDKVYTNDFAKWKAIAKECFEIHKTGRPILVGTSSIEKSDFVSFLLENYKLQYNVLNARPENLKYESEIVGEAGCLNAITIATNMAGRGTDIILGGSPGFKIIRLLKILVLKVKLKEARTKKGLFLTHELYKELQKERLNYDAITQLVKFETEFGQKQIVRQKKLSTLFFYLKINYKSRFKKQKQYINQLGGLYVIGTERQDSKRIDNQLRGRAGRQGDAGSSRFFVSIEDKIFRLFGDNKFSNLFNQLNLTNEEISLESDLITKTLDNTQERVENYYYDIRKQVYDYDELITEQRKTFYLFRSKVLKTQVSGNLIIASTEDVIKKIVKSIKTPQLKFTNLTHKQENQIILEDFEQCRRIMRYALPPINLKQINASNHNVLFEFLMQEFWISYDIHKTKAFSSIGEEYYKEYERSCVLESIDHGWSTNLEKMETIRESIVWRVYAQKDPLAEYKKEGFSTFRKMDEEMKRFLVFAVFDTDFYVT.

ATP-binding positions include Q82, 100-104 (GEGKT), and D491.

The protein belongs to the SecA family.

It localises to the plastid. Its subcellular location is the chloroplast stroma. It is found in the chloroplast thylakoid membrane. It catalyses the reaction ATP + H2O + cellular proteinSide 1 = ADP + phosphate + cellular proteinSide 2.. In terms of biological role, has a central role in coupling the hydrolysis of ATP to the transfer of proteins across the thylakoid membrane. In Olisthodiscus luteus (Marine phytoflagellate), this protein is Protein translocase subunit SecA.